A 271-amino-acid chain; its full sequence is Shikimate dehydrogenase (NADP(+)) (271 aa).

Residues 14–16 (SKS) and Thr-61 each bind shikimate. The Proton acceptor role is filled by Lys-65. The shikimate site is built by Asn-86 and Asp-102. NADP(+)-binding positions include 126-130 (GAGGA), 149-154 (NRTFSR), and Met-213. Residue Tyr-215 participates in shikimate binding. Gly-238 contributes to the NADP(+) binding site.

The protein belongs to the shikimate dehydrogenase family. Homodimer.

The enzyme catalyses shikimate + NADP(+) = 3-dehydroshikimate + NADPH + H(+). It functions in the pathway metabolic intermediate biosynthesis; chorismate biosynthesis; chorismate from D-erythrose 4-phosphate and phosphoenolpyruvate: step 4/7. Functionally, involved in the biosynthesis of the chorismate, which leads to the biosynthesis of aromatic amino acids. Catalyzes the reversible NADPH linked reduction of 3-dehydroshikimate (DHSA) to yield shikimate (SA). The chain is Shikimate dehydrogenase (NADP(+)) from Histophilus somni (strain 2336) (Haemophilus somnus).